A 336-amino-acid polypeptide reads, in one-letter code: tRNA N6-adenosine threonylcarbamoyltransferase (336 aa).

Positions 114 and 118 each coordinate Fe cation. Substrate contacts are provided by residues 136–140, Asp169, Gly182, Asp186, and Asn275; that span reads LVSGG. A Fe cation-binding site is contributed by Asp302.

Belongs to the KAE1 / TsaD family. It depends on Fe(2+) as a cofactor.

The protein resides in the cytoplasm. The enzyme catalyses L-threonylcarbamoyladenylate + adenosine(37) in tRNA = N(6)-L-threonylcarbamoyladenosine(37) in tRNA + AMP + H(+). Functionally, required for the formation of a threonylcarbamoyl group on adenosine at position 37 (t(6)A37) in tRNAs that read codons beginning with adenine. Is involved in the transfer of the threonylcarbamoyl moiety of threonylcarbamoyl-AMP (TC-AMP) to the N6 group of A37, together with TsaE and TsaB. TsaD likely plays a direct catalytic role in this reaction. The chain is tRNA N6-adenosine threonylcarbamoyltransferase from Streptococcus agalactiae serotype V (strain ATCC BAA-611 / 2603 V/R).